The sequence spans 183 residues: Hypoxanthine/guanine phosphoribosyltransferase (183 aa).

Belongs to the purine/pyrimidine phosphoribosyltransferase family. Archaeal HPRT subfamily. Homodimer.

It is found in the cytoplasm. It carries out the reaction IMP + diphosphate = hypoxanthine + 5-phospho-alpha-D-ribose 1-diphosphate. It catalyses the reaction GMP + diphosphate = guanine + 5-phospho-alpha-D-ribose 1-diphosphate. It functions in the pathway purine metabolism; IMP biosynthesis via salvage pathway; IMP from hypoxanthine: step 1/1. Functionally, catalyzes a salvage reaction resulting in the formation of IMP that is energically less costly than de novo synthesis. This chain is Hypoxanthine/guanine phosphoribosyltransferase, found in Methanothermococcus okinawensis (strain DSM 14208 / JCM 11175 / IH1).